Reading from the N-terminus, the 250-residue chain is 5-oxoprolinase subunit A (250 aa).

Belongs to the LamB/PxpA family. Forms a complex composed of PxpA, PxpB and PxpC.

It catalyses the reaction 5-oxo-L-proline + ATP + 2 H2O = L-glutamate + ADP + phosphate + H(+). In terms of biological role, catalyzes the cleavage of 5-oxoproline to form L-glutamate coupled to the hydrolysis of ATP to ADP and inorganic phosphate. The chain is 5-oxoprolinase subunit A from Chromohalobacter salexigens (strain ATCC BAA-138 / DSM 3043 / CIP 106854 / NCIMB 13768 / 1H11).